The primary structure comprises 339 residues: Ferrochelatase (339 aa).

Positions 202 and 283 each coordinate Fe cation.

Belongs to the ferrochelatase family.

The protein resides in the cytoplasm. The catalysed reaction is heme b + 2 H(+) = protoporphyrin IX + Fe(2+). It functions in the pathway porphyrin-containing compound metabolism; protoheme biosynthesis; protoheme from protoporphyrin-IX: step 1/1. Its function is as follows. Catalyzes the ferrous insertion into protoporphyrin IX. This chain is Ferrochelatase, found in Psychrobacter arcticus (strain DSM 17307 / VKM B-2377 / 273-4).